The chain runs to 554 residues: Oxygen-dependent choline dehydrogenase (554 aa).

Aspartate 4–glutamate 33 lines the FAD pocket. Histidine 473 acts as the Proton acceptor in catalysis.

Belongs to the GMC oxidoreductase family. FAD serves as cofactor.

The enzyme catalyses choline + A = betaine aldehyde + AH2. It catalyses the reaction betaine aldehyde + NAD(+) + H2O = glycine betaine + NADH + 2 H(+). The protein operates within amine and polyamine biosynthesis; betaine biosynthesis via choline pathway; betaine aldehyde from choline (cytochrome c reductase route): step 1/1. Functionally, involved in the biosynthesis of the osmoprotectant glycine betaine. Catalyzes the oxidation of choline to betaine aldehyde and betaine aldehyde to glycine betaine at the same rate. This Klebsiella pneumoniae subsp. pneumoniae (strain ATCC 700721 / MGH 78578) protein is Oxygen-dependent choline dehydrogenase.